We begin with the raw amino-acid sequence, 775 residues long: DENN domain-containing protein 1B (775 aa).

Positions 14–143 constitute a uDENN domain; the sequence is DLVLKVKCHA…YNHPVPKANT (130 aa). A cDENN domain is found at 180-316; the sequence is GLPTIPESRN…VVSALKNKLK (137 aa). Residues 318-395 form the dDENN domain; it reads QSTATGDGVA…DGRLAKLNAG (78 aa). The FXDXF motif motif lies at 398 to 402; the sequence is FSDVF. Tyrosine 520 carries the post-translational modification Phosphotyrosine. Serine 535, serine 536, serine 549, and serine 552 each carry phosphoserine. Positions 566–575 match the Clathrin box motif; sequence DLLGEILDTL. 2 disordered regions span residues 635–654 and 671–706; these read DSAL…VSSS and HLGA…KRET. Over residues 639-651 the composition is skewed to basic residues; that stretch reads HGKHLPPSPRKRV. A phosphoserine mark is found at serine 652 and serine 653. A compositionally biased stretch (basic and acidic residues) spans 695–706; sequence QTDKGKTEKRET.

Interacts with RAB35. Interacts with clathrin heavy chain/CLTC. Interacts with components of the adapter protein complex 2 (AP-2) AP2A2 and AP2B1. Interacts with CD3E. Post-translationally, phosphorylated on serine and/or threonine, possibly regulating the guanine nucleotide exchange factor (GEF) activity. As to expression, highly expressed in dendritic and natural killer cells and at lower levels in other myeloid lineage cells and in pituitary. Significantly up-regulated in effector memory T-cells as compared with naive T-cells.

It localises to the cytoplasm. Its subcellular location is the cytosol. It is found in the cytoplasmic vesicle. The protein localises to the clathrin-coated vesicle. Functionally, guanine nucleotide exchange factor (GEF) for RAB35 that acts as a regulator of T-cell receptor (TCR) internalization in TH2 cells. Acts by promoting the exchange of GDP to GTP, converting inactive GDP-bound RAB35 into its active GTP-bound form. Plays a role in clathrin-mediated endocytosis. Controls cytokine production in TH2 lymphocytes by controlling the rate of TCR internalization and routing to endosomes: acts by mediating clathrin-mediated endocytosis of TCR via its interaction with the adapter protein complex 2 (AP-2) and GEF activity. Dysregulation leads to impaired TCR down-modulation and recycling, affecting cytokine production in TH2 cells. The polypeptide is DENN domain-containing protein 1B (Homo sapiens (Human)).